The sequence spans 315 residues: Methionyl-tRNA formyltransferase (315 aa).

Residues 2-189 (SDSLRIIFAG…LITTLKQLAD (188 aa)) are N-terminal domain. 113 to 116 (SLLP) lines the (6S)-5,6,7,8-tetrahydrofolate pocket. The interval 210 to 315 (KEEARIDWSL…EWFIPGNRLA (106 aa)) is C-terminal domain.

Belongs to the Fmt family.

The enzyme catalyses L-methionyl-tRNA(fMet) + (6R)-10-formyltetrahydrofolate = N-formyl-L-methionyl-tRNA(fMet) + (6S)-5,6,7,8-tetrahydrofolate + H(+). In terms of biological role, attaches a formyl group to the free amino group of methionyl-tRNA(fMet). The formyl group appears to play a dual role in the initiator identity of N-formylmethionyl-tRNA by promoting its recognition by IF2 and preventing the misappropriation of this tRNA by the elongation apparatus. This Salmonella choleraesuis (strain SC-B67) protein is Methionyl-tRNA formyltransferase.